We begin with the raw amino-acid sequence, 221 residues long: Bcl-2-related ovarian killer protein homolog A (221 aa).

The BH4 motif lies at 32–44 (KVLCRDYIHSRLH). Residues 64–80 (VSSVLLWLGDELEYLRP) carry the BH3 motif. The BH1 motif lies at 110 to 140 (EIFSTEYSRKGLEKHKGVTWGKIVSLYAVAG). Positions 173 to 187 (WLKKRGGWADITKCV) match the BH2 motif. A helical membrane pass occupies residues 198–218 (WLVTAACACGHYLKAVVFYLL).

This sequence belongs to the Bcl-2 family. In terms of tissue distribution, strongest expression in ovary and eye, weaker expression in gut, kidney and brain. Little expression in liver or heart.

Its subcellular location is the membrane. Its function is as follows. May play a role in apoptosis. Does not appear to show pro-apoptotic activity when expressed ectopically in early embryos. In Danio rerio (Zebrafish), this protein is Bcl-2-related ovarian killer protein homolog A.